The sequence spans 197 residues: RNA polymerase II subunit A C-terminal domain phosphatase ssup-72 (197 aa).

S39 bears the Phosphoserine mark.

The protein belongs to the SSU72 phosphatase family. As to quaternary structure, may interact with synd-1 (via C-terminus); the interaction may prevent ssup-72 binding to RNA polymerase II ama-1. May interact with RNA polymerase II ama-1. In terms of processing, may be phosphorylated by kin-20. As to expression, expressed in epidermis, intestine and nervous system.

It is found in the nucleus. The catalysed reaction is O-phospho-L-seryl-[protein] + H2O = L-seryl-[protein] + phosphate. The enzyme catalyses O-phospho-L-threonyl-[protein] + H2O = L-threonyl-[protein] + phosphate. Its function is as follows. Protein phosphatase that dephosphorylates 'Ser-5' of the heptad repeats YSPTSPS in the C-terminal domain of the large RNA polymerase II subunit ama-1. By regulating the phosphorylation status of ama-1 and thus ama-1 binding to specific polyadenylation sites, regulates alternative polyadenylation of pre-mRNAs, including unc-44 and dlk-1 mRNAs. This results in the tissue-specific expression of unc-44 isoforms. The polypeptide is RNA polymerase II subunit A C-terminal domain phosphatase ssup-72 (Caenorhabditis elegans).